We begin with the raw amino-acid sequence, 187 residues long: Nicotinamide-nucleotide adenylyltransferase (187 aa).

The protein belongs to the archaeal NMN adenylyltransferase family.

It localises to the cytoplasm. The enzyme catalyses beta-nicotinamide D-ribonucleotide + ATP + H(+) = diphosphate + NAD(+). It participates in cofactor biosynthesis; NAD(+) biosynthesis; NAD(+) from nicotinamide D-ribonucleotide: step 1/1. In Thermococcus onnurineus (strain NA1), this protein is Nicotinamide-nucleotide adenylyltransferase.